The chain runs to 175 residues: Pituitary adenylate cyclase-activating polypeptide (175 aa).

The signal sequence occupies residues 1–24 (MTMCSGARLALLVYGIIMHNSVSC). A propeptide spanning residues 25 to 78 (SPAAGLSFPGIRPEEEAYDQDGNPLQDFYDWDPPGAGSPASALRDAYALYYPAD) is cleaved from the precursor. The tract at residues 149-157 (VKKYLAAVL) is important for receptor binding. At Leu157 the chain carries Leucine amide. At Lys168 the chain carries Lysine amide. The propeptide occupies 172–175 (IAYL).

Belongs to the glucagon family.

It is found in the secreted. In terms of biological role, PACAP is a neuropeptide involved in diverse array of physiological processes through activating the PACAP subfamily of class B1 G protein-coupled receptors: VIP receptor 1 (VIPR1), VIP receptor 2 (VIPR2), and PACAP type I receptor (ADCYAP1R1). Exerts neuroprotective and general cytoprotective effects due to anti-apoptotic, anti-inflammatory, and antioxidant actions. Promotes neuron projection development through the RAPGEF2/Rap1/B-Raf/ERK pathway. In chromaffin cells, induces long-lasting increase of intracellular calcium concentrations and neuroendocrine secretion. Involved in the control of glucose homeostasis, induces insulin secretion by pancreatic beta cells. PACAP exists in two bioactive forms from proteolysis of the same precursor protein, PACAP27 and PACAP38, which differ by eleven amino acid residues in the C-terminus. The chain is Pituitary adenylate cyclase-activating polypeptide (Adcyap1) from Rattus norvegicus (Rat).